A 424-amino-acid polypeptide reads, in one-letter code: MPAILDVRGREVLDSRGNPTVEAEVYLEDGSVGRAIVPSGASTGSREALELRDNDPKRYKGKGVLQAVKNINEIIAQELIGLEALDQYTVDKTMIELDGTENKSRLGANAILAVSLATARAAAASLGVPLYLYLGGVQARELPTPLMNVINGGKHADNPLDFQEYMIVPLASTFKESLRWAVEVFHTLKSILKSKGLNTNVGDEGGFAPYLEKNEDPLAILVEAIQKAGFEPGKDVALALDLAASEFYENGKYILKAEGKELTSDEMISFLEYLCDKYPIVSIEDGLSEKDWDGWKKLTDKLGKRVQLVGDDIFVTNPKILAEGIEKGIANAILVKVNQIGSLTETLDTIRIAHQAGYRTVISHRSGETEDTFIADLSVAVNSGQIKTGSLSRTDRIAKYNQLLRIEEELGEAALYRGILNFKR.

(2R)-2-phosphoglycerate is bound at residue Q163. The active-site Proton donor is E204. Mg(2+)-binding residues include D241, E284, and D311. K336, R365, S366, and K387 together coordinate (2R)-2-phosphoglycerate. K336 serves as the catalytic Proton acceptor.

Belongs to the enolase family. Mg(2+) is required as a cofactor.

The protein resides in the cytoplasm. The protein localises to the secreted. It is found in the cell surface. It catalyses the reaction (2R)-2-phosphoglycerate = phosphoenolpyruvate + H2O. It functions in the pathway carbohydrate degradation; glycolysis; pyruvate from D-glyceraldehyde 3-phosphate: step 4/5. Functionally, catalyzes the reversible conversion of 2-phosphoglycerate (2-PG) into phosphoenolpyruvate (PEP). It is essential for the degradation of carbohydrates via glycolysis. This Dictyoglomus thermophilum (strain ATCC 35947 / DSM 3960 / H-6-12) protein is Enolase.